A 391-amino-acid chain; its full sequence is NADH-quinone oxidoreductase subunit D (391 aa).

Belongs to the complex I 49 kDa subunit family. As to quaternary structure, NDH-1 is composed of 14 different subunits. Subunits NuoB, C, D, E, F, and G constitute the peripheral sector of the complex.

The protein resides in the cell inner membrane. The catalysed reaction is a quinone + NADH + 5 H(+)(in) = a quinol + NAD(+) + 4 H(+)(out). NDH-1 shuttles electrons from NADH, via FMN and iron-sulfur (Fe-S) centers, to quinones in the respiratory chain. The immediate electron acceptor for the enzyme in this species is believed to be ubiquinone. Couples the redox reaction to proton translocation (for every two electrons transferred, four hydrogen ions are translocated across the cytoplasmic membrane), and thus conserves the redox energy in a proton gradient. This Rickettsia bellii (strain OSU 85-389) protein is NADH-quinone oxidoreductase subunit D.